We begin with the raw amino-acid sequence, 471 residues long: tRNA-2-methylthio-N(6)-dimethylallyladenosine synthase (471 aa).

One can recognise an MTTase N-terminal domain in the interval K29 to R146. 6 residues coordinate [4Fe-4S] cluster: C38, C74, C109, C187, C191, and C194. One can recognise a Radical SAM core domain in the interval R173 to E405. The TRAM domain occupies K408–D467.

The protein belongs to the methylthiotransferase family. MiaB subfamily. In terms of assembly, monomer. The cofactor is [4Fe-4S] cluster.

The protein localises to the cytoplasm. The catalysed reaction is N(6)-dimethylallyladenosine(37) in tRNA + (sulfur carrier)-SH + AH2 + 2 S-adenosyl-L-methionine = 2-methylsulfanyl-N(6)-dimethylallyladenosine(37) in tRNA + (sulfur carrier)-H + 5'-deoxyadenosine + L-methionine + A + S-adenosyl-L-homocysteine + 2 H(+). Its function is as follows. Catalyzes the methylthiolation of N6-(dimethylallyl)adenosine (i(6)A), leading to the formation of 2-methylthio-N6-(dimethylallyl)adenosine (ms(2)i(6)A) at position 37 in tRNAs that read codons beginning with uridine. In Neorickettsia sennetsu (strain ATCC VR-367 / Miyayama) (Ehrlichia sennetsu), this protein is tRNA-2-methylthio-N(6)-dimethylallyladenosine synthase.